The sequence spans 255 residues: MSGHSKWHSIRRTKGVLDQRRGQLFTKLARDITIATREGGSGDPEANFRLRLAVDKARAANMPMDNIQRAIDRGLGRGGSDAAALEEIYYEGYAPGGVALLIEAATDNRNRTASDVRATMTKNGGSPGEPGSVSWMFETRGLITIDLSVKRLDPDEVMLIAIDAGAEDVQIEDDIVEVYTDFKQLAAVRQQLIAAGLPVTGAEKTMIAKTTVQPDTADALKAMRLIEKLEDLDDVQKVYSNLEITSELAEQFVSG.

Belongs to the TACO1 family.

The protein resides in the cytoplasm. The protein is Probable transcriptional regulatory protein Rcas_0718 of Roseiflexus castenholzii (strain DSM 13941 / HLO8).